We begin with the raw amino-acid sequence, 848 residues long: MSYTLDSLGNPSAYRRVTETRSSFSRVSGSPSSGFRSQSWSRGSPSTVSSSYKRSALAPRLAYSSAMLSSAESSLDFSQSSSLLNGGSGGDYKLSRSNEKEQLQGLNDRFAGYIEKVHYLEQQNKEIEAEIQALRQKQASHAQLGDAYDQEIRELRATLEMVNHEKAQVQLDSDHLEEDIHRLKERFEEEARLRDDTEAAIRALRKDIEESSMVKVELDKKVQSLQDEVAFLRSNHEEEVADLLAQIQASHITVERKDYLKTDISTALKEIRSQLECHSDQNMHQAEEWFKCRYAKLTEAAEQNKEAIRSAKEEIAEYRRQLQSKSIELESVRGTKESLERQLSDIEERHNHDLSSYQDTIQQLENELRGTKWEMARHLREYQDLLNVKMALDIEIAAYRKLLEGEETRFSTFSGSITGPLYTHRQPSVTISSKIQKTKVEAPKLKVQHKFVEEIIEETKVEDEKSEMEETLTAIAEELAASAKEEKEEAEEKEEEPEAEKSPVKSPEAKEEEEEGEKEEEEEGQEEEEEEDEGVKSDQAEEGGSEKEGSSEKDEGEQEEEEGETEAEGEGEEAEAKEEKKIEGKVEEVAVKEEIKVEKPEKAKSPMPKSPVEEVKPKPEAKAGKGEQKEEEKVEEEKKEVTKESPKEEKVEKKEEKPKDVADKKKAESPVKEKAVEEVITISKSVKVSLEKDTKEEKPQPQEKVKEKAEEEGGSEEEGSDRSPQESKKEDIAINGEVEGKEEEEQETQEKGSGREEEKGVVTNGLDVSPAEEKKGEDSSDDKVVVTKKVEKITSEGGDGATKYITKSVTVTQKVEEHEETFEEKLVSTKKVEKVTSHAIVKEVTQGD.

The segment covering 1 to 10 (MSYTLDSLGN) has biased composition (polar residues). A disordered region spans residues 1–51 (MSYTLDSLGNPSAYRRVTETRSSFSRVSGSPSSGFRSQSWSRGSPSTVSSS). N-acetylserine is present on Ser-2. Positions 2–102 (SYTLDSLGNP…KLSRSNEKEQ (101 aa)) are head. The segment covering 21-44 (RSSFSRVSGSPSSGFRSQSWSRGS) has biased composition (low complexity). Ser-30 carries the post-translational modification Phosphoserine. Arg-42 carries the post-translational modification Omega-N-methylarginine. O-linked (GlcNAc) threonine glycosylation is present at Thr-47. Ser-97 carries the post-translational modification Phosphoserine. One can recognise an IF rod domain in the interval 99–410 (EKEQLQGLND…KLLEGEETRF (312 aa)). Residues 103 to 134 (LQGLNDRFAGYIEKVHYLEQQNKEIEAEIQAL) are coil 1A. Positions 135–147 (RQKQASHAQLGDA) are linker 1. A coil 1B region spans residues 148-246 (YDQEIRELRA…EEEVADLLAQ (99 aa)). Ser-224 carries the post-translational modification Phosphoserine. Positions 247–263 (IQASHITVERKDYLKTD) are linker 12. Positions 264–285 (ISTALKEIRSQLECHSDQNMHQ) are coil 2A. Residues 286-289 (AEEW) are linker 2. Residues 290–410 (FKCRYAKLTE…KLLEGEETRF (121 aa)) are coil 2B. Residue Tyr-318 is modified to Phosphotyrosine. Residues Ser-344, Ser-416, and Ser-428 each carry the phosphoserine modification. A tail region spans residues 411–848 (STFSGSITGP…AIVKEVTQGD (438 aa)). An O-linked (GlcNAc) threonine glycan is attached at Thr-430. Residues Ser-466 and Ser-482 each carry the phosphoserine modification. The segment at 482 to 785 (SAKEEKEEAE…GEDSSDDKVV (304 aa)) is disordered. The segment covering 488-498 (EEAEEKEEEPE) has biased composition (acidic residues). Residues 499-509 (AEKSPVKSPEA) show a composition bias toward basic and acidic residues. Phosphoserine occurs at positions 502 and 506. Residues 510–533 (KEEEEEGEKEEEEEGQEEEEEEDE) show a composition bias toward acidic residues. The span at 534-553 (GVKSDQAEEGGSEKEGSSEK) shows a compositional bias: basic and acidic residues. Phosphoserine is present on residues Ser-537, Ser-545, Ser-550, and Ser-551. Residues 554 to 576 (DEGEQEEEEGETEAEGEGEEAEA) show a composition bias toward acidic residues. A Phosphothreonine modification is found at Thr-565. Over residues 577-604 (KEEKKIEGKVEEVAVKEEIKVEKPEKAK) the composition is skewed to basic and acidic residues. Ser-605 and Ser-610 each carry phosphoserine. 2 stretches are compositionally biased toward basic and acidic residues: residues 611–677 (PVEE…KAVE) and 689–711 (SLEK…KAEE). Thr-642 carries the phosphothreonine modification. A phosphoserine mark is found at Ser-645, Ser-669, Ser-689, Ser-715, Ser-723, Ser-753, and Ser-769. 2 stretches are compositionally biased toward basic and acidic residues: residues 720–732 (SDRS…KEDI) and 748–760 (TQEK…EEKG). A compositionally biased stretch (basic and acidic residues) spans 771–785 (AEEKKGEDSSDDKVV).

This sequence belongs to the intermediate filament family. Forms heterodimers with NEFL; which can further hetero-oligomerize (in vitro). Forms heterodimers with INA (in vitro). In terms of processing, there are a number of repeats of the tripeptide K-S-P, NFM is phosphorylated on a number of the serines in this motif. It is thought that phosphorylation of NFM results in the formation of interfilament cross bridges that are important in the maintenance of axonal caliber. Phosphorylation seems to play a major role in the functioning of the larger neurofilament polypeptides (NF-M and NF-H), the levels of phosphorylation being altered developmentally and coincidentally with a change in the neurofilament function. Post-translationally, phosphorylated in the head and rod regions by the PKC kinase PKN1, leading to the inhibition of polymerization. In terms of tissue distribution, expressed in the sciatic nerve (at protein level).

Its subcellular location is the cytoplasm. It is found in the cytoskeleton. The protein resides in the cell projection. It localises to the axon. Its function is as follows. Neurofilaments usually contain three intermediate filament proteins: NEFL, NEFM, and NEFH which are involved in the maintenance of neuronal caliber. May additionally cooperate with the neuronal intermediate filament proteins PRPH and INA to form neuronal filamentous networks. In Mus musculus (Mouse), this protein is Neurofilament medium polypeptide (Nefm).